We begin with the raw amino-acid sequence, 856 residues long: Serine/threonine-protein phosphatase 6 regulatory subunit 1 (856 aa).

The tract at residues 10-403 is interaction with PPP6C; it reads SSHLDTLLEK…VFNNFLHAQV (394 aa). Phosphoserine is present on Ser232. Phosphothreonine is present on Thr524. A phosphoserine mark is found at Ser529, Ser530, and Ser531. Residues 621–630 show a composition bias toward acidic residues; the sequence is DDEEEEEEEG. Disordered regions lie at residues 621–770 and 792–856; these read DDEE…KVAE and RSAP…SGSQ. 2 positions are modified to phosphoserine: Ser633 and Ser636. The segment covering 644-656 has biased composition (polar residues); sequence QGSQPVRASQASQ. A compositionally biased stretch (acidic residues) spans 667 to 683; that stretch reads DSEEEDEEEDEEEDEGA. Phosphoserine is present on residues Ser698 and Ser739. A compositionally biased stretch (polar residues) spans 794–809; sequence APSSLDSATRDPSTSV. Residue Ser826 is modified to Phosphoserine. Low complexity predominate over residues 842–856; the sequence is PNGSTPGGPISSGSQ.

This sequence belongs to the SAPS family. In terms of assembly, protein phosphatase 6 (PP6) holoenzyme is proposed to be a heterotrimeric complex formed of the catalytic subunit, a SAPS domain-containing subunit (PP6R) and an ankyrin repeat-domain containing regulatory subunit (ARS). Interacts with PPP6C and NFKBIE. Interacts with ANKRD28, ANKRD44 and ANKRD52. Ubiquitous with highest expression in lung, spleen and bladder.

The protein resides in the cytoplasm. Its function is as follows. Regulatory subunit of protein phosphatase 6 (PP6). May function as a scaffolding PP6 subunit. Involved in the PP6-mediated dephosphorylation of NFKBIE opposing its degradation in response to TNF-alpha. The polypeptide is Serine/threonine-protein phosphatase 6 regulatory subunit 1 (Ppp6r1) (Mus musculus (Mouse)).